The sequence spans 674 residues: Probable L-type lectin-domain containing receptor kinase II.1 (674 aa).

An N-terminal signal peptide occupies residues 1–24; it reads MAGVLGSVVFWLIIGIHVTFLVFA. At 25 to 301 the chain is on the extracellular side; the sequence is QEGDHFVYYD…PSPKRFPLKE (277 aa). A legume-lectin like region spans residues 28-274; sequence DHFVYYDFRN…NQYILGWSFK (247 aa). 6 N-linked (GlcNAc...) asparagine glycosylation sites follow: N57, N117, N133, N185, N210, and N242. The helical transmembrane segment at 302 to 322 threads the bilayer; it reads VLGATISTIAFLTLGGIVYLY. Residues 323–674 are Cytoplasmic-facing; sequence KKKKYAEVLE…EDVTVLFGGR (352 aa). The region spanning 355-633 is the Protein kinase domain; it reads FRENQLLGAG…LEGNVSVPAI (279 aa). ATP-binding positions include 361-369 and K383; that span reads LGAGGFGKV. The active-site Proton acceptor is the D480.

In the C-terminal section; belongs to the protein kinase superfamily. Ser/Thr protein kinase family. This sequence in the N-terminal section; belongs to the leguminous lectin family.

The protein localises to the cell membrane. The enzyme catalyses L-seryl-[protein] + ATP = O-phospho-L-seryl-[protein] + ADP + H(+). It carries out the reaction L-threonyl-[protein] + ATP = O-phospho-L-threonyl-[protein] + ADP + H(+). The protein is Probable L-type lectin-domain containing receptor kinase II.1 (LECRK21) of Arabidopsis thaliana (Mouse-ear cress).